Reading from the N-terminus, the 120-residue chain is Mating factor alpha-2 (120 aa).

Residues 1–21 (MKFISTFLTFILAAVSVTASS) form the signal peptide. 2 propeptides span residues 22 to 86 (DEDI…VADA) and 102 to 107 (EANADA).

Functionally, the active factor is excreted into the culture medium by haploid cells of the alpha mating type and acts on cells of the opposite mating type (type A). It mediates the conjugation process between the two types by inhibiting the initiation of DNA synthesis in type a cells and synchronizing them with type alpha. This is Mating factor alpha-2 (MF(ALPHA)2) from Saccharomyces cerevisiae (strain ATCC 204508 / S288c) (Baker's yeast).